The sequence spans 145 residues: 3-dehydroquinate dehydratase (145 aa).

Catalysis depends on tyrosine 23, which acts as the Proton acceptor. Asparagine 74, histidine 80, and aspartate 87 together coordinate substrate. Histidine 100 acts as the Proton donor in catalysis. Substrate is bound by residues 101–102 (IS) and arginine 111.

The protein belongs to the type-II 3-dehydroquinase family. Homododecamer.

It carries out the reaction 3-dehydroquinate = 3-dehydroshikimate + H2O. It functions in the pathway metabolic intermediate biosynthesis; chorismate biosynthesis; chorismate from D-erythrose 4-phosphate and phosphoenolpyruvate: step 3/7. In terms of biological role, catalyzes a trans-dehydration via an enolate intermediate. This chain is 3-dehydroquinate dehydratase, found in Mycobacterium leprae (strain Br4923).